We begin with the raw amino-acid sequence, 628 residues long: MAAPPLSSWPWASLGSYKYVLYGAVVWKVAEEWRQQGAAPVGSWWLHLLLLFAARGLTYQFWFSYGNMLFFTRRRRVVPDSVDFRQVDAEWDWDNFLLLQTLIGATLVGSPAVARQQLLLPSLKQAWDPRGWAIALLLHVLVAEPLFYWAHRALHRAPLFSRYHAAHHHASVTTPLTAGFGTPLESLLLTVVIGVPLAGAFLMGVGSVGLVYGHVLLFDFLRSMGYSNVEVISPRVFQAVPLLRYLIYTPTYLSLHHREKDSNFCLFMPIFDLLGGTLNHKSWELQKEVYLGKNDQAPDFVFLAHVVDIMASMHVPFVLRSCSSTPFANHFVLLPFWPVAFGFMLLMWCCSKTFLVSSYRLRGNLHQMWTVPRYGFQYFIPAAKKGINEQIELAILRADRMGVKVLSLAALNKNEALNGGGTLFVNKHPELRVRVVHGNTLTAAVILNEIPSNVKDVFLTGATSKLGRAIALYLCRKKIRVLMLTLSSERFLKIQREAPAEFQQYLVQVTKYQPAQNCKTWLVGKWLSPREQRWAPAGTHFHQFVVPPIIGFRRDCTYGKLAAMRLPKDVQGLGYCEYTMERGVVHACHAGGVVHFLEGWEHHEVGAIDVDRIDVVWKAALKHGLTPA.

A run of 5 helical transmembrane segments spans residues 37 to 57, 131 to 151, 191 to 211, 299 to 319, and 331 to 351; these read GAAP…ARGL, GWAI…YWAH, VVIG…VGLV, DFVF…PFVL, and FVLL…WCCS. One can recognise a Fatty acid hydroxylase domain in the interval 137-277; the sequence is LLHVLVAEPL…MPIFDLLGGT (141 aa).

It belongs to the sterol desaturase family. As to quaternary structure, homodimer. Expressed in germinating seeds, radicals and leaves.

Its subcellular location is the endoplasmic reticulum membrane. The catalysed reaction is a long-chain fatty aldehyde + 2 NADPH + O2 + H(+) = a long-chain alkane + formate + 2 NADP(+) + H2O. Functionally, aldehyde decarbonylase involved in the conversion of aldehydes to alkanes. Core component of a very-long-chain alkane synthesis complex. Required for the formation of wax layers conferring cuticular permeability and drought tolerance. This Oryza sativa subsp. japonica (Rice) protein is Very-long-chain aldehyde decarbonylase GL1-2.